Reading from the N-terminus, the 132-residue chain is Small ribosomal subunit protein uS8c (132 aa).

This sequence belongs to the universal ribosomal protein uS8 family. As to quaternary structure, part of the 30S ribosomal subunit.

The protein resides in the plastid. It localises to the chloroplast. One of the primary rRNA binding proteins, it binds directly to 16S rRNA central domain where it helps coordinate assembly of the platform of the 30S subunit. This is Small ribosomal subunit protein uS8c (rps8) from Anthoceros angustus (Hornwort).